A 645-amino-acid chain; its full sequence is Aminopeptidase P1 (645 aa).

Ser2 is modified (N-acetylserine). Residues Arg69 and His420 each contribute to the a peptide site. Mn(2+)-binding residues include Asp440, Asp451, and His514. The a peptide site is built by His514, His523, and Glu549. Mn(2+) is bound by residues Glu549 and Glu563.

It belongs to the peptidase M24B family. In terms of assembly, homodimer. Interacts with N-1-naphthylphthalamic acid (NPA). Requires Mn(2+) as cofactor. The cofactor is Zn(2+). Glycosylated. Also present in a non-glycosylated form. In terms of tissue distribution, ubiquitous with preferential expression in 5 days-old seedlings, roots, flowers, inflorescences and rosette leaves (at protein levels).

The protein localises to the cytoplasm. It is found in the cell membrane. It localises to the microsome membrane. It carries out the reaction Release of any N-terminal amino acid, including proline, that is linked to proline, even from a dipeptide or tripeptide.. Its activity is regulated as follows. Inhibited by EGTA and apstatin, and, to some extent, by the flavonoid kaempferol. Its function is as follows. Catalyzes the removal of a penultimate prolyl residue from the N-termini of peptides, such as Arg-Pro-Pro. Aminopeptidase that binds to the auxin transport inhibitor N-1-naphthylphthalamic acid (NPA). May play a negative role in the regulation of PIN auxin transport proteins. The protein is Aminopeptidase P1 of Arabidopsis thaliana (Mouse-ear cress).